The following is a 94-amino-acid chain: Integration host factor subunit beta (94 aa).

Belongs to the bacterial histone-like protein family. In terms of assembly, heterodimer of an alpha and a beta chain.

This protein is one of the two subunits of integration host factor, a specific DNA-binding protein that functions in genetic recombination as well as in transcriptional and translational control. This chain is Integration host factor subunit beta, found in Haemophilus influenzae (strain 86-028NP).